The following is a 255-amino-acid chain: Hydroxyacylglutathione hydrolase (255 aa).

Residues His53, His55, Asp57, His58, His110, Asp127, and His165 each contribute to the Zn(2+) site.

The protein belongs to the metallo-beta-lactamase superfamily. Glyoxalase II family. As to quaternary structure, monomer. It depends on Zn(2+) as a cofactor.

It carries out the reaction an S-(2-hydroxyacyl)glutathione + H2O = a 2-hydroxy carboxylate + glutathione + H(+). It functions in the pathway secondary metabolite metabolism; methylglyoxal degradation; (R)-lactate from methylglyoxal: step 2/2. Functionally, thiolesterase that catalyzes the hydrolysis of S-D-lactoyl-glutathione to form glutathione and D-lactic acid. This chain is Hydroxyacylglutathione hydrolase, found in Xanthomonas axonopodis pv. citri (strain 306).